The sequence spans 138 residues: Putative pre-16S rRNA nuclease (138 aa).

Belongs to the YqgF nuclease family.

The protein resides in the cytoplasm. Functionally, could be a nuclease involved in processing of the 5'-end of pre-16S rRNA. This Mycoplasma genitalium (strain ATCC 33530 / DSM 19775 / NCTC 10195 / G37) (Mycoplasmoides genitalium) protein is Putative pre-16S rRNA nuclease.